The following is a 388-amino-acid chain: GTPase Obg (388 aa).

Positions 1–159 (MKFVDEAVIR…RSLKLELLLL (159 aa)) constitute an Obg domain. One can recognise an OBG-type G domain in the interval 160–333 (ADVGLLGMPN…LAAKLWDFIQ (174 aa)). GTP is bound by residues 166 to 173 (GMPNAGKS), 191 to 195 (FTTLV), 213 to 216 (DIPG), 283 to 286 (NKAD), and 314 to 316 (SAY). Residues S173 and T193 each coordinate Mg(2+).

This sequence belongs to the TRAFAC class OBG-HflX-like GTPase superfamily. OBG GTPase family. In terms of assembly, monomer. Requires Mg(2+) as cofactor.

The protein resides in the cytoplasm. An essential GTPase which binds GTP, GDP and possibly (p)ppGpp with moderate affinity, with high nucleotide exchange rates and a fairly low GTP hydrolysis rate. Plays a role in control of the cell cycle, stress response, ribosome biogenesis and in those bacteria that undergo differentiation, in morphogenesis control. The chain is GTPase Obg from Shewanella oneidensis (strain ATCC 700550 / JCM 31522 / CIP 106686 / LMG 19005 / NCIMB 14063 / MR-1).